Reading from the N-terminus, the 76-residue chain is Small ribosomal subunit protein bS18 (76 aa).

It belongs to the bacterial ribosomal protein bS18 family. As to quaternary structure, part of the 30S ribosomal subunit. Forms a tight heterodimer with protein bS6.

Binds as a heterodimer with protein bS6 to the central domain of the 16S rRNA, where it helps stabilize the platform of the 30S subunit. The sequence is that of Small ribosomal subunit protein bS18 from Pelotomaculum thermopropionicum (strain DSM 13744 / JCM 10971 / SI).